Reading from the N-terminus, the 357-residue chain is Mitochondrial carrier protein LEU5 (357 aa).

The next 6 helical transmembrane spans lie at 31–47 (DYIVRSGLAGGISGSCA), 103–119 (LRIFPYAAVKFVAYEQI), 136–153 (LVSGSLAGLCSVFITYPL), 208–228 (VPTVLGMIPYAGVSFFAHDLL), 269–285 (ISGGLAGMASQTAAYPF), and 325–347 (GFFVGLSIGYIKVTPMVACSFFV). Solcar repeat units follow at residues 31 to 122 (DYIV…IRNT), 130 to 231 (ESHW…LHDV), and 262 to 354 (LRTW…MKWN).

It belongs to the mitochondrial carrier (TC 2.A.29) family.

It is found in the mitochondrion inner membrane. Required for the accumulation of coenzyme A in the mitochondrial matrix. This Saccharomyces cerevisiae (strain ATCC 204508 / S288c) (Baker's yeast) protein is Mitochondrial carrier protein LEU5 (LEU5).